We begin with the raw amino-acid sequence, 264 residues long: Short chain dehydrogenase/reductase AacuN (264 aa).

Residues isoleucine 24, aspartate 70, asparagine 97, and arginine 130 each contribute to the NADP(+) site. Catalysis depends on proton donor residues serine 146, serine 147, and tyrosine 161. NADP(+) contacts are provided by tyrosine 161, lysine 165, and threonine 196. Catalysis depends on lysine 165, which acts as the Lowers pKa of active site Tyr.

Belongs to the short-chain dehydrogenases/reductases (SDR) family.

The catalysed reaction is 3,8,9,10-tetrahydroxy-6-methyl-1,4-dihydroanthracen-1-one + NADPH + H(+) = (3R)-3,8,9,10-tetrahydroxy-6-methyl-1,2,3,4-tetrahydroanthracen-1-one + NADP(+). Its pathway is secondary metabolite biosynthesis. In terms of biological role, atrochrysone carboxylic acid synthase; part of the gene cluster that mediates the biosynthesis of the tetrahydroxanthone dimer secalonic acid D. The pathway begins with the synthesis of atrochrysone thioester by the polyketide synthase AacuL. The atrochrysone carboxyl ACP thioesterase AacuM then breaks the thioester bond and releases the atrochrysone carboxylic acid from AacuL. Atrochrysone carboxylic acid is decarboxylated by the decarboxylase AacuI, and oxidized by the anthrone oxygenase AacuG to yield emodin. Emodin is then reduced to emodin hydroquinone by a yet unidentified oxidoreductase. A-ring reduction by the short chain dehydrogenase AacuN, dehydration by the scytalone dehydratase-like protein AacuK and probable spontaneous re-oxidation, results in overall deoxygenation to chrysophanol. Baeyer-Villiger oxidation by the Baeyer-Villiger monooxygenase (BVMO) AacuH then yields monodictyphenone. Monodictyphenone is transformed into compounds with the tetrahydroxanthone skeleton via methylesterification by the methyltransferase AacuQ, followed by the action of the flavin-dependent monooxygenase AacuC, the isomerase AacuP, and the short chain dehydrogenase/reductase AacuF or AacuD. AacuF and AacuD should accept the same compound as a substrate but perform the ketoreduction with a different stereoselectivity, thus yielding blennolides B and A, respectively. In the final step of the biosynthesis, the cytochrome P450 monooxygenase AacuE accepts blennolide B and/or blennolide A to conduct the dimerization reaction to furnish the tetrahydroxanthone dimers, secalonic acids D, B, and F. The protein is Short chain dehydrogenase/reductase AacuN of Aspergillus aculeatus (strain ATCC 16872 / CBS 172.66 / WB 5094).